The sequence spans 282 residues: Pantothenate synthetase (282 aa).

ATP is bound at residue 30–37; sequence MGYYHAGH. Residue histidine 37 is the Proton donor of the active site. (R)-pantoate is bound at residue glutamine 61. Position 61 (glutamine 61) interacts with beta-alanine. Residue 147 to 150 coordinates ATP; sequence GQKD. Glutamine 153 lines the (R)-pantoate pocket. ATP-binding positions include valine 176 and 184–187; that span reads LSSR.

It belongs to the pantothenate synthetase family. Homodimer.

Its subcellular location is the cytoplasm. The catalysed reaction is (R)-pantoate + beta-alanine + ATP = (R)-pantothenate + AMP + diphosphate + H(+). The protein operates within cofactor biosynthesis; (R)-pantothenate biosynthesis; (R)-pantothenate from (R)-pantoate and beta-alanine: step 1/1. Its function is as follows. Catalyzes the condensation of pantoate with beta-alanine in an ATP-dependent reaction via a pantoyl-adenylate intermediate. The polypeptide is Pantothenate synthetase (Desulfovibrio desulfuricans (strain ATCC 27774 / DSM 6949 / MB)).